A 248-amino-acid chain; its full sequence is Floral homeotic protein AGAMOUS (248 aa).

Residues 19-73 (RGKIEIKRIENTTNRQVTFCKRRNGLLKKAYELSVLCDAEVALIVFSSRGRLYEY) form the MADS-box domain. Residues 103-193 (AQYYQQEASK…RAKIAETERA (91 aa)) form the K-box domain. A disordered region spans residues 196-219 (QQQQQQMNLMPGSSSYELVPPPHQ). The span at 202–211 (MNLMPGSSSY) shows a compositional bias: polar residues.

Its subcellular location is the nucleus. Probable transcription factor involved in regulating genes that determines stamen and carpel development in wild-type flowers. This is Floral homeotic protein AGAMOUS (AG1) from Nicotiana tabacum (Common tobacco).